A 132-amino-acid polypeptide reads, in one-letter code: uncharacterized protein (132 aa).

This is an uncharacterized protein from Acanthamoeba polyphaga (Amoeba).